Here is a 122-residue protein sequence, read N- to C-terminus: UPF0344 protein BPUM_1008 (122 aa).

Transmembrane regions (helical) follow at residues 5-25, 33-53, 60-80, and 93-113; these read LHIT…ALAG, IVHM…VELY, IPGF…VIGF, and SVTG…LLGL.

This sequence belongs to the UPF0344 family.

Its subcellular location is the cell membrane. The protein is UPF0344 protein BPUM_1008 of Bacillus pumilus (strain SAFR-032).